The sequence spans 233 residues: MESSGKMESGAGQQPQPPQPFLPPAACFFATAAAAAAAAAAAAAQSAQQQQQQQAPQQQAPQLSPVADGQPSGGGHKSAAKQVKRQRSSSPELMRCKRRLNFSGFGYSLPQQQPAAVARRNERERNRVKLVNLGFATLREHVPNGAANKKMSKVETLRSAVEYIRALQQLLDEHDAVSAAFQAGVLSPTISPNYSNDLNSMAGSPVSSYSSDEGSYDPLSPEEQELLDFTNWF.

Disordered regions lie at residues 1–24 and 39–95; these read MESS…FLPP and AAAA…ELMR. Residues 39 to 62 show a composition bias toward low complexity; sequence AAAAAAQSAQQQQQQQAPQQQAPQ. Residues 78 to 87 are compositionally biased toward basic residues; it reads SAAKQVKRQR. The 53-residue stretch at 115–167 folds into the bHLH domain; sequence AAVARRNERERNRVKLVNLGFATLREHVPNGAANKKMSKVETLRSAVEYIRAL. K153 carries the N6-acetyllysine modification.

As to quaternary structure, efficient DNA binding requires dimerization with another bHLH protein. Forms a heterodimer with TCF3. In terms of tissue distribution, developing CNS and PNS at embryonic and postnatal stages.

Its subcellular location is the nucleus. Transcription factor that plays a key role in neuronal differentiation: acts as a pioneer transcription factor, accessing closed chromatin to allow other factors to bind and activate neural pathways. Directly binds the E box motif (5'-CANNTG-3') on promoters and promotes transcription of neuronal genes. The combination of three transcription factors, ASCL1, POU3F2/BRN2 and MYT1L, is sufficient to reprogram fibroblasts and other somatic cells into induced neuronal (iN) cells in vitro. Plays a role at early stages of development of specific neural lineages in most regions of the CNS, and of several lineages in the PNS. Essential for the generation of olfactory and autonomic neurons. Acts synergistically with FOXN4 to specify the identity of V2b neurons rather than V2a from bipotential p2 progenitors during spinal cord neurogenesis, probably through DLL4-NOTCH signaling activation. Involved in the regulation of neuroendocrine cell development in the glandular stomach. This chain is Achaete-scute homolog 1 (Ascl1), found in Rattus norvegicus (Rat).